The following is a 138-amino-acid chain: MRTLWIVAVLLLGVEGSLVQFETLIMKIAGRSGLLWYSAYGCYCGWGGHGLPQDATDRCCFVHDCCYGKATDCNPKTVSYTYSEENGEIICGGDDPCGTQICECDKAAAICFRDNIPSYDNKYWLFPPKNCREEPEPC.

The N-terminal stretch at 1–16 is a signal peptide; it reads MRTLWIVAVLLLGVEG. Disulfide bonds link cysteine 42/cysteine 131, cysteine 44/cysteine 60, cysteine 59/cysteine 111, cysteine 65/cysteine 138, cysteine 66/cysteine 104, cysteine 73/cysteine 97, and cysteine 91/cysteine 102. Ca(2+) is bound by residues tyrosine 43, glycine 45, and glycine 47. Residue histidine 63 is part of the active site. Residue aspartate 64 participates in Ca(2+) binding. Residue aspartate 105 is part of the active site.

This sequence belongs to the phospholipase A2 family. Group II subfamily. D49 sub-subfamily. In terms of assembly, homodimer. The cofactor is Ca(2+). Expressed by the venom gland.

It is found in the secreted. It catalyses the reaction a 1,2-diacyl-sn-glycero-3-phosphocholine + H2O = a 1-acyl-sn-glycero-3-phosphocholine + a fatty acid + H(+). Functionally, PLA2 catalyzes the calcium-dependent hydrolysis of the 2-acyl groups in 3-sn-phosphoglycerides. The chain is Acidic phospholipase A2 from Crotalus atrox (Western diamondback rattlesnake).